The chain runs to 130 residues: Small ribosomal subunit protein bS16 (130 aa).

The segment at 82-130 (VLPKTERNNPKKAVPGKKAQDRAEEKAAKAAEASEAPADEAPAEEAAAE) is disordered. A compositionally biased stretch (basic and acidic residues) spans 99–110 (KAQDRAEEKAAK). Acidic residues predominate over residues 118–130 (PADEAPAEEAAAE).

This sequence belongs to the bacterial ribosomal protein bS16 family.

In Dinoroseobacter shibae (strain DSM 16493 / NCIMB 14021 / DFL 12), this protein is Small ribosomal subunit protein bS16.